A 589-amino-acid polypeptide reads, in one-letter code: Serine/threonine-protein phosphatase 2A 65 kDa regulatory subunit A alpha isoform (589 aa).

At alanine 2 the chain carries N-acetylalanine. HEAT repeat units follow at residues 8-46 (DSLYPIAVLIDELRNEDVQLRLNSIKKLSTIALALGVER), 47-84 (TRSELLPFLTDTIYDEDEVLLALAEQLGTFTTLVGGPE), 85-123 (YVHCLLPPLESLATVEETVVRDKAVESLRAISHEHSPSD), 124-161 (LEAHFVPLVKRLAGGDWFTSRTSACGLFSVCYPRVSSA), 162-200 (VKAELRQYFRNLCSDDTPMVRRAAASKLGEFAKVLELDN), 201-239 (VKSEIIPMFSNLASDEQDSVRLLAVEACVNIAQLLPQED), 240-278 (LEALVMPTLRQAAEDKSWRVRYMVADKFTELHKAVGPEI), 279-321 (TKTD…RENV), 322-360 (IMTQILPCIKELVSDANQHVKSALASVIMGLSPILGKDS), 361-399 (TIEHLLPLFLAQLKDECPEVRLNIISNLDCVNEVIGIRQ), 400-438 (LSQSLLPAIVELAEDAKWRVRLAIIEYMPLLAGQLGVEF), 439-477 (FDEKLNSLCMAWLVDHVYAIREAATSNLKKLVEKFGKEW), 478-516 (AHATIIPKVLAMSGDPNYLHRMTTLFCINVLSEVCGQDI), 517-555 (TTKHMLPTVLRMAGDPVANVRFNVAKSLQKIGPILDNST), and 556-589 (LQSEVKPVLEKLTQDQDVDVKYFAQEALTVLSLA). The segment at 8 to 399 (DSLYPIAVLI…CVNEVIGIRQ (392 aa)) is PP2A subunit B binding. The polyoma small and medium T antigens Binding stretch occupies residues 47–321 (TRSELLPFLT…NLSADCRENV (275 aa)). Residues 85-239 (YVHCLLPPLE…NIAQLLPQED (155 aa)) are SV40 small T antigen binding. Lysine 280 bears the N6-acetyllysine mark. The interval 400–589 (LSQSLLPAIV…QEALTVLSLA (190 aa)) is PP2A subunit C binding.

This sequence belongs to the phosphatase 2A regulatory subunit A family. PP2A consists of a common heterodimeric core enzyme, composed of PPP2CA a 36 kDa catalytic subunit (subunit C) and PPP2R1A a 65 kDa constant regulatory subunit (PR65 or subunit A), that associates with a variety of regulatory subunits. Proteins that associate with the core dimer include three families of regulatory subunits B (the R2/B/PR55/B55, R3/B''/PR72/PR130/PR59 and R5/B'/B56 families), the 48 kDa variable regulatory subunit, viral proteins, and cell signaling molecules. Found in a complex with at least ARL2, PPP2CB, PPP2R1A, PPP2R2A, PPP2R5E and TBCD. Interacts with the PP2A C catalytic subunit PPP2CA. Interacts with the PP2A B subunit PPP2R2A. Interacts with the PP2A B subunit PPP2R5D. Interacts with FOXO1; the interaction dephosphorylates FOXO1 on AKT-mediated phosphorylation sites. Interacts with IPO9. Interacts with TP53 and SGO1. Interacts with PLA2G16; this interaction might decrease PP2A activity. Interacts with CTTNBP2NL. Interacts with GNA12; the interaction promotes protein phosphatase 2A activation causing dephosphorylation of MAPT. Interacts with CIP2A; this interaction stabilizes CIP2A. Interacts with PABIR1/FAM122A. Interacts with ADCY8; antagonizes interaction between ADCY8 and calmodulin. Interacts with CRTC3 (when phosphorylated at 'Ser-391'). Interacts with SPRY2. Part of the core of STRIPAK complexes composed of PP2A catalytic and scaffolding subunits, the striatins (PP2A regulatory subunits), the striatin-associated proteins MOB4, STRIP1 and STRIP2, PDCD10 and members of the STE20 kinases, such as STK24 and STK26. Component of the Integrator-PP2A (INTAC) complex, composed of the Integrator core complex and protein phosphatase 2A subunits PPP2CA and PPP2R1A.

It is found in the cytoplasm. The protein resides in the nucleus. It localises to the chromosome. The protein localises to the centromere. Its subcellular location is the lateral cell membrane. It is found in the cell projection. The protein resides in the dendrite. In terms of biological role, the PR65 subunit of protein phosphatase 2A serves as a scaffolding molecule to coordinate the assembly of the catalytic subunit and a variable regulatory B subunit. Upon interaction with GNA12 promotes dephosphorylation of microtubule associated protein TAU/MAPT. Required for proper chromosome segregation and for centromeric localization of SGO1 in mitosis. Together with RACK1 adapter, mediates dephosphorylation of AKT1 at 'Ser-473', preventing AKT1 activation and AKT-mTOR signaling pathway. Dephosphorylation of AKT1 is essential for regulatory T-cells (Treg) homeostasis and stability. Part of the striatin-interacting phosphatase and kinase (STRIPAK) complexes. STRIPAK complexes have critical roles in protein (de)phosphorylation and are regulators of multiple signaling pathways including Hippo, MAPK, nuclear receptor and cytoskeleton remodeling. Different types of STRIPAK complexes are involved in a variety of biological processes such as cell growth, differentiation, apoptosis, metabolism and immune regulation. Key mediator of a quality checkpoint during transcription elongation as part of the Integrator-PP2A (INTAC) complex. The INTAC complex drives premature transcription termination of transcripts that are unfavorably configured for transcriptional elongation: within the INTAC complex, acts as a scaffolding subunit for PPP2CA, which catalyzes dephosphorylation of the C-terminal domain (CTD) of Pol II subunit POLR2A/RPB1 and SUPT5H/SPT5, thereby preventing transcriptional elongation. Regulates the recruitment of the SKA complex to kinetochores. In Bos taurus (Bovine), this protein is Serine/threonine-protein phosphatase 2A 65 kDa regulatory subunit A alpha isoform (PPP2R1A).